We begin with the raw amino-acid sequence, 192 residues long: Xanthine phosphoribosyltransferase (192 aa).

Residues Leu20 and Asn27 each coordinate xanthine. 128 to 132 (ANGDA) provides a ligand contact to 5-phospho-alpha-D-ribose 1-diphosphate. Lys156 serves as a coordination point for xanthine.

This sequence belongs to the purine/pyrimidine phosphoribosyltransferase family. Xpt subfamily. As to quaternary structure, homodimer.

It is found in the cytoplasm. It carries out the reaction XMP + diphosphate = xanthine + 5-phospho-alpha-D-ribose 1-diphosphate. Its pathway is purine metabolism; XMP biosynthesis via salvage pathway; XMP from xanthine: step 1/1. Its function is as follows. Converts the preformed base xanthine, a product of nucleic acid breakdown, to xanthosine 5'-monophosphate (XMP), so it can be reused for RNA or DNA synthesis. The chain is Xanthine phosphoribosyltransferase from Staphylococcus aureus (strain JH1).